Here is a 394-residue protein sequence, read N- to C-terminus: Protein NDRG1 (394 aa).

Position 2 is an N-acetylserine (Ser-2). 3 positions are modified to phosphoserine: Ser-2, Ser-319, and Ser-326. The tract at residues 325–394 (RSRTASGSSV…AGPKSMEVSC (70 aa)) is disordered. Positions 327-339 (RTASGSSVTSLEG) are enriched in polar residues. Thr-328 is subject to Phosphothreonine. Ser-330 carries the post-translational modification Phosphoserine; by SGK1. Phosphoserine is present on residues Ser-332 and Ser-333. Thr-335 is modified (phosphothreonine). Position 336 is a phosphoserine (Ser-336). 3 tandem repeats follow at residues 339–348 (GTRSRSHTSE), 349–358 (GPRSRSHTSE), and 359–368 (GSRSRSHTSE). The tract at residues 339–368 (GTRSRSHTSEGPRSRSHTSEGSRSRSHTSE) is 3 X 10 AA tandem repeats of G-[PST]-R-S-R-S-H-T-S-E. Thr-340 is modified (phosphothreonine). Ser-342 is subject to Phosphoserine. Basic and acidic residues predominate over residues 345–371 (HTSEGPRSRSHTSEGSRSRSHTSEDAR). Phosphothreonine; by SGK1 is present on Thr-346. Ser-352 carries the post-translational modification Phosphoserine. Thr-356 is subject to Phosphothreonine; by SGK1. Residues Ser-362 and Ser-364 each carry the phosphoserine modification. Thr-366 carries the phosphothreonine; by SGK1 modification. Positions 374–386 (ITPNSGATGNNAG) are enriched in polar residues. A Phosphothreonine modification is found at Thr-375.

Belongs to the NDRG family. Interacts with RAB4A (membrane-bound form); the interaction involves NDRG1 in vesicular recycling of CDH1. Interacts with APOA1, APOA2, PRA1 and RTN1. Post-translationally, under stress conditions, phosphorylated in the C-terminal on many serine and threonine residues. Phosphorylated in vitro by PKA. Phosphorylation enhanced by increased intracellular cAMP levels. Homocysteine induces dephosphorylation. Phosphorylation by SGK1 is cell cycle dependent. Widely expressed, with highest levels in kidney followed by brain, pancreas, small intestine, colon and spleen (at protein level). Also detected in heart and preputial gland, and in much smaller quantities in other tissues. Not detected in duodenum and prostate. Highly expressed in Schwann cells.

The protein resides in the cytoplasm. The protein localises to the cytosol. It localises to the cytoskeleton. It is found in the microtubule organizing center. Its subcellular location is the centrosome. The protein resides in the nucleus. The protein localises to the cell membrane. Stress-responsive protein involved in hormone responses, cell growth, and differentiation. Acts as a tumor suppressor in many cell types. Necessary but not sufficient for p53/TP53-mediated caspase activation and apoptosis. Required for vesicular recycling of CDH1 and TF. May also function in lipid trafficking. Protects cells from spindle disruption damage. Functions in p53/TP53-dependent mitotic spindle checkpoint. Regulates microtubule dynamics and maintains euploidy. Has a role in cell trafficking notably of the Schwann cell and is necessary for the maintenance and development of the peripheral nerve myelin sheath. In Mus musculus (Mouse), this protein is Protein NDRG1 (Ndrg1).